The primary structure comprises 863 residues: Alanine--tRNA ligase (863 aa).

Zn(2+) is bound by residues His-552, His-556, Cys-654, and His-658.

It belongs to the class-II aminoacyl-tRNA synthetase family. Requires Zn(2+) as cofactor.

The protein localises to the cytoplasm. It carries out the reaction tRNA(Ala) + L-alanine + ATP = L-alanyl-tRNA(Ala) + AMP + diphosphate. Catalyzes the attachment of alanine to tRNA(Ala) in a two-step reaction: alanine is first activated by ATP to form Ala-AMP and then transferred to the acceptor end of tRNA(Ala). Also edits incorrectly charged Ser-tRNA(Ala) and Gly-tRNA(Ala) via its editing domain. The polypeptide is Alanine--tRNA ligase (Halorhodospira halophila (strain DSM 244 / SL1) (Ectothiorhodospira halophila (strain DSM 244 / SL1))).